The chain runs to 1503 residues: Rho GTPase-activating protein 5 (1503 aa).

FF domains follow at residues 267-325 (QLVV…HIEQ), 366-420 (KLME…HVQH), 427-481 (RIEM…HQRE), and 482-548 (IVEK…HIGF). Position 550 is a 3'-nitrotyrosine (tyrosine 550). 2 positions are modified to phosphoserine: serine 590 and serine 765. The pG1 pseudoGTPase domain occupies 590 to 763 (STNIDKVNLF…LESVKHNLDV (174 aa)). Residues 779 to 944 (RIVMCAMCGD…FSDVLEKKNM (166 aa)) form the pG2 pseudoGTPase domain. 2 positions are modified to phosphoserine: serine 951 and serine 968. 3 disordered regions span residues 975 to 1004 (YNNY…LPTP), 1022 to 1050 (HSTP…PKTN), and 1069 to 1091 (NPRK…SDNY). The segment covering 1036–1045 (VPPPIKPKPV) has biased composition (pro residues). Serine 1115 carries the post-translational modification Phosphoserine. Disordered regions lie at residues 1129–1157 (NTQG…YKYK) and 1169–1255 (YRRT…TRRN). A compositionally biased stretch (basic and acidic residues) spans 1141–1151 (RTSKGHGERRP). Serine 1196, serine 1203, and serine 1219 each carry phosphoserine. In terms of domain architecture, Rho-GAP spans 1263 to 1450 (MPLQDLVTAE…TFIQQCQFFF (188 aa)).

In terms of assembly, may interact with RASA1/p120GAP. In terms of tissue distribution, expressed in spinal cord, cerebellum, kidney, testis and lung.

Its subcellular location is the cytoplasm. It localises to the cell membrane. In terms of biological role, GTPase-activating protein for Rho family members. The protein is Rho GTPase-activating protein 5 (Arhgap5) of Mus musculus (Mouse).